A 190-amino-acid chain; its full sequence is Ribosome maturation factor RimM (190 aa).

Residues Glu-102–Asp-190 enclose the PRC barrel domain.

Belongs to the RimM family. Binds ribosomal protein uS19.

It is found in the cytoplasm. An accessory protein needed during the final step in the assembly of 30S ribosomal subunit, possibly for assembly of the head region. Essential for efficient processing of 16S rRNA. May be needed both before and after RbfA during the maturation of 16S rRNA. It has affinity for free ribosomal 30S subunits but not for 70S ribosomes. The polypeptide is Ribosome maturation factor RimM (Bordetella avium (strain 197N)).